We begin with the raw amino-acid sequence, 223 residues long: Deoxyribose-phosphate aldolase (223 aa).

Asp-89 (proton donor/acceptor) is an active-site residue. The active-site Schiff-base intermediate with acetaldehyde is Lys-152. Lys-181 (proton donor/acceptor) is an active-site residue.

Belongs to the DeoC/FbaB aldolase family. DeoC type 1 subfamily.

Its subcellular location is the cytoplasm. The catalysed reaction is 2-deoxy-D-ribose 5-phosphate = D-glyceraldehyde 3-phosphate + acetaldehyde. Its pathway is carbohydrate degradation; 2-deoxy-D-ribose 1-phosphate degradation; D-glyceraldehyde 3-phosphate and acetaldehyde from 2-deoxy-alpha-D-ribose 1-phosphate: step 2/2. Its function is as follows. Catalyzes a reversible aldol reaction between acetaldehyde and D-glyceraldehyde 3-phosphate to generate 2-deoxy-D-ribose 5-phosphate. The protein is Deoxyribose-phosphate aldolase of Listeria monocytogenes serotype 4b (strain CLIP80459).